The sequence spans 476 residues: NADH-quinone oxidoreductase subunit N (476 aa).

A run of 13 helical transmembrane segments spans residues 7-27 (LTVE…GLLV), 33-53 (RGIA…AFGM), 59-79 (VVLG…LFLV), 100-120 (GEYY…ASSG), 122-142 (LVSL…LAAF), 156-176 (YVLL…LVYG), 199-219 (LLLG…AVPF), 237-257 (FLSV…FFGA), 265-285 (WVQL…LVAI), 305-325 (LLLG…YYAM), 363-383 (VAAL…MAGF), 399-419 (IWLA…YLLV), and 437-457 (VAPG…ILGI).

The protein belongs to the complex I subunit 2 family. In terms of assembly, NDH-1 is composed of 14 different subunits. Subunits NuoA, H, J, K, L, M, N constitute the membrane sector of the complex.

It localises to the cell membrane. The catalysed reaction is a quinone + NADH + 5 H(+)(in) = a quinol + NAD(+) + 4 H(+)(out). Functionally, NDH-1 shuttles electrons from NADH, via FMN and iron-sulfur (Fe-S) centers, to quinones in the respiratory chain. The immediate electron acceptor for the enzyme in this species is believed to be a menaquinone. Couples the redox reaction to proton translocation (for every two electrons transferred, four hydrogen ions are translocated across the cytoplasmic membrane), and thus conserves the redox energy in a proton gradient. This chain is NADH-quinone oxidoreductase subunit N, found in Moorella thermoacetica (strain ATCC 39073 / JCM 9320).